We begin with the raw amino-acid sequence, 1094 residues long: Potassium-transporting ATPase alpha chain 2 (1094 aa).

Basic and acidic residues predominate over residues 1–21; the sequence is MAGGAHRADRATGEERKEGGG. Residues 1 to 37 are disordered; the sequence is MAGGAHRADRATGEERKEGGGRWRAPHSPSPPGPRGC. The span at 28 to 37 shows a compositional bias: pro residues; that stretch reads SPSPPGPRGC. Residues 56 to 157 are Cytoplasmic-facing; the sequence is RYCTLLLFQR…NALTPPKQTP (102 aa). A helical membrane pass occupies residues 158 to 178; sequence EIIKFLKQMVGGFSILLWVGA. The Lumenal segment spans residues 179–201; sequence VLCWIAFGIQYVSNPSASLDRVY. The helical transmembrane segment at 202–222 threads the bilayer; that stretch reads LGTVLAVVVILTGIFAYYQEA. Topologically, residues 223 to 358 are cytoplasmic; that stretch reads KSTNIMASFC…NEKTPIAIEI (136 aa). The segment at 286–305 is disordered; the sequence is SSLTGESEPQSRSSGFTHEN. A helical membrane pass occupies residues 359 to 378; it reads EHFVHIVAGVAVSVGILFFI. At 379–390 the chain is on the lumenal side; sequence IAVCMKYHVLDA. Residues 391–408 form a helical membrane-spanning segment; that stretch reads IIFLIAIIVANVPEGLLA. At 409–842 the chain is on the cytoplasmic side; the sequence is TVTVALSLTA…EEGRLIFDNL (434 aa). Asp446 (4-aspartylphosphate intermediate) is an active-site residue. Asp787 and Asp791 together coordinate Mg(2+). The chain crosses the membrane as a helical span at residues 843–862; sequence KKTIAYTLTKNIAELCPFLI. The Lumenal segment spans residues 863–872; the sequence is YIILGLPLPI. A helical transmembrane segment spans residues 873–893; the sequence is GTITLLFIDLGTDIIPSIALA. Topologically, residues 894-913 are cytoplasmic; it reads YEKAESDIMNRKPRHKKKDR. Residues 914–936 traverse the membrane as a helical segment; that stretch reads LVNQQLAVYSYLHIGLMQALGAF. At 937–988 the chain is on the lumenal side; it reads LVYFTVYAQQGFRPTSLFHLRIAWDSDHLNDLEDNYGQEWTSYQRQYLEWTG. Residues 989-1008 traverse the membrane as a helical segment; the sequence is YTAFFVGIMVQQIADLIIRK. The Cytoplasmic segment spans residues 1009–1022; that stretch reads TRKNSIFKQGLFRN. Ser1013 carries the phosphoserine; by PKA modification. A helical membrane pass occupies residues 1023 to 1041; it reads KVIWVGIASQIIVALLLSY. Over 1042-1056 the chain is Lumenal; it reads GLGSITALNFTMLKA. Residues 1057–1077 traverse the membrane as a helical segment; that stretch reads QYWFVAVPHAILIWVYDEMRK. The Cytoplasmic segment spans residues 1078–1094; it reads LFIRLYPGSWWDKNMYY.

Belongs to the cation transport ATPase (P-type) (TC 3.A.3) family. Type IIC subfamily. In terms of assembly, the X(+)/K(+) ATPase pump is composed of a catalytic alpha subunit and an auxiliary non-catalytic beta subunit. The alpha subunit pairs with the beta subunit of gastric H(+)/K(+) ATPase ATP4B or the beta subunit of Na(+)/K(+) ATPases ATP1B1 and ATP1B3; this interaction is required for the formation of a functionally active pump and its targeting at the plasma membrane. In terms of tissue distribution, found in the skin, kidney, distal colon and brain. In the kidney it is found in the connecting tubule, cortical collecting duct and outer medullary collecting duct while in the brain it is specific to choroid plexus and cortex.

It localises to the apical cell membrane. The catalysed reaction is K(+)(out) + ATP + H2O + H(+)(in) = K(+)(in) + ADP + phosphate + 2 H(+)(out). It catalyses the reaction K(+)(out) + Na(+)(in) + ATP + H2O = K(+)(in) + Na(+)(out) + ADP + phosphate + H(+). The catalytic subunit of a H(+)/K(+) ATPase and/or Na(+)/K(+) ATPase pump which transports K(+) ions in exchange for Na(+) and/or H(+) ions across the apical membrane of epithelial cells. Uses ATP as an energy source to pump K(+) ions into the cell while transporting Na(+) and/or H(+) ions to the extracellular compartment. Involved in the maintenance of electrolyte homeostasis through K(+) ion absorption in kidney and colon. In the airway epithelium, may play a primary role in mucus acidification regulating its viscosity and clearance. This chain is Potassium-transporting ATPase alpha chain 2 (ATP12A), found in Oryctolagus cuniculus (Rabbit).